The chain runs to 218 residues: Uracil-DNA glycosylase (218 aa).

Asp68 (proton acceptor) is an active-site residue.

It belongs to the uracil-DNA glycosylase (UDG) superfamily. UNG family. In terms of assembly, homodimer. Interacts with protein OPG148. Component of the Uracil-DNA glycosylase(UDG)-OPG148-polymerase complex; OPG148 and UDG form a heterodimeric processivity factor that associates with OPG71 to form the processive polymerase holoenzyme.

It carries out the reaction Hydrolyzes single-stranded DNA or mismatched double-stranded DNA and polynucleotides, releasing free uracil.. In terms of biological role, plays an essential role in viral replication as a component of the DNA polymerase processivity factor. Excises uracil residues from the DNA which can arise as a result of misincorporation of dUMP residues by DNA polymerase or due to deamination of cytosine. The chain is Uracil-DNA glycosylase (OPG116) from Homo sapiens (Human).